Here is a 430-residue protein sequence, read N- to C-terminus: Nitroalkane oxidase (430 aa).

FAD contacts are provided by residues 132-135 (LVFS), 140-142 (VAN), 170-172 (WAT), R301, Q311, 372-376 (NAVGI), and 397-401 (IFDGG). The active-site Proton acceptor is D399.

Belongs to the acyl-CoA dehydrogenase family. Homotetramer. It depends on FAD as a cofactor.

It catalyses the reaction a primary nitroalkane + O2 + H2O = an aldehyde + nitrite + H2O2 + H(+). It carries out the reaction a secondary nitroalkane + O2 + H2O = a ketone + nitrite + H2O2 + H(+). Its function is as follows. Nitroalkane oxidase (NAO) catalyzes the oxidation of nitroalkanes to the corresponding aldehydes or ketones with the release of nitrite and the consumption of molecular oxygen to yield hydrogen peroxide. NAO is unusual, since it catalyzes substrate oxidation by removing a substrate proton to form a carbanion intermediate. Prefers longer nitroalkanes, with 1-nitrohexane having the highest activity. In Podospora anserina (strain S / ATCC MYA-4624 / DSM 980 / FGSC 10383) (Pleurage anserina), this protein is Nitroalkane oxidase.